The chain runs to 373 residues: Unsaturated rhamnogalacturonyl hydrolase YteR (373 aa).

Substrate contacts are provided by residues 40–41 (HY), D88, and 132–136 (HKDGY). D143 serves as the catalytic Proton donor. Residues 213–217 (RSIGW) and 333–334 (TS) contribute to the substrate site.

This sequence belongs to the glycosyl hydrolase 105 family. Monomer.

The protein resides in the cytoplasm. The enzyme catalyses 2-O-(4-deoxy-beta-L-threo-hex-4-enopyranuronosyl)-alpha-L-rhamnose + H2O = 5-dehydro-4-deoxy-D-glucuronate + L-rhamnopyranose. In terms of biological role, catalyzes the hydrolysis of unsaturated rhamnogalacturonan disaccharide to yield unsaturated D-galacturonic acid and L-rhamnose. It cannot act on unsaturated glucuronyl hydrolase (UGL) substrates containing unsaturated D-glucuronic acid at the non-reducing terminus, although the active pockets of YesR and UGL are very similar. The polypeptide is Unsaturated rhamnogalacturonyl hydrolase YteR (yteR) (Bacillus subtilis (strain 168)).